Reading from the N-terminus, the 148-residue chain is Single-stranded DNA-binding protein 1-B, mitochondrial (148 aa).

A mitochondrion-targeting transit peptide spans 1-17; the sequence is MFHRPVLQVFRQFARCQ. The SSB domain maps to 30–142; it reads MNKVQLLGRV…IIADNIIFLT (113 aa).

In terms of assembly, homotetramer.

Its subcellular location is the mitochondrion. It localises to the mitochondrion matrix. The protein localises to the mitochondrion nucleoid. Its function is as follows. Binds preferentially and cooperatively to pyrimidine rich single-stranded DNA (ss-DNA). Required to maintain the copy number of mitochondrial DNA (mtDNA) and plays crucial roles during mtDNA replication that stimulate activity of the DNA polymerase at the replication fork. May also function in mtDNA repair. The sequence is that of Single-stranded DNA-binding protein 1-B, mitochondrial (ssbp1-b) from Xenopus laevis (African clawed frog).